The following is a 165-amino-acid chain: Myosin regulatory light chain 2A, cardiac muscle isoform (165 aa).

N,N,N-trimethylalanine is present on A2. 3 consecutive EF-hand domains span residues 24–59 (AQIQEFKEAFTIMDQNRDGFIDKADLRDTFAALGRL), 94–128 (DPEETILNAFKVFDPEGKGLKSAYIKEMLMTQEGR), and 129–164 (FSQEEIDQMFAAFPPDVSGNLDYKNLVHVITHGEEK). Ca(2+)-binding residues include D37, N39, D41, and D48.

As to quaternary structure, myosin is a hexamer of 2 heavy chains and 4 light chains. Post-translationally, the N-terminus is blocked. N,N,N-trimethylalanine, found in other myosin light chains would not have been detected in the N-terminal tryptic peptide in PubMed:7319048 because it would remain trimethylated and ninhydrin negative after hydrolysis.

The sequence is that of Myosin regulatory light chain 2A, cardiac muscle isoform from Gallus gallus (Chicken).